We begin with the raw amino-acid sequence, 250 residues long: NAD(P)H-hydrate epimerase (250 aa).

The 225-residue stretch at 14-238 folds into the YjeF N-terminal domain; it reads AAALDVELMS…SIAEKYGIQK (225 aa). 74–78 is a (6S)-NADPHX binding site; that stretch reads NNGGD. N75 and D143 together coordinate K(+). (6S)-NADPHX contacts are provided by residues 147 to 154, Y159, and D180; that span reads GFSFHGTA. S183 is a binding site for K(+).

It belongs to the NnrE/AIBP family. It depends on K(+) as a cofactor.

The enzyme catalyses (6R)-NADHX = (6S)-NADHX. It catalyses the reaction (6R)-NADPHX = (6S)-NADPHX. Functionally, catalyzes the epimerization of the S- and R-forms of NAD(P)HX, a damaged form of NAD(P)H that is a result of enzymatic or heat-dependent hydration. This is a prerequisite for the S-specific NAD(P)H-hydrate dehydratase to allow the repair of both epimers of NAD(P)HX. The protein is NAD(P)H-hydrate epimerase of Thalassiosira pseudonana (Marine diatom).